Consider the following 212-residue polypeptide: Glycerol-3-phosphate acyltransferase (212 aa).

A run of 5 helical transmembrane segments spans residues 5–25 (ALGM…ILVC), 53–73 (VAAA…VWLA), 80–100 (PLYL…PVFF), 112–132 (FGAI…TWLL), and 138–158 (GYSS…VWWF).

It belongs to the PlsY family. As to quaternary structure, probably interacts with PlsX.

It is found in the cell inner membrane. The enzyme catalyses an acyl phosphate + sn-glycerol 3-phosphate = a 1-acyl-sn-glycero-3-phosphate + phosphate. Its pathway is lipid metabolism; phospholipid metabolism. Functionally, catalyzes the transfer of an acyl group from acyl-phosphate (acyl-PO(4)) to glycerol-3-phosphate (G3P) to form lysophosphatidic acid (LPA). This enzyme utilizes acyl-phosphate as fatty acyl donor, but not acyl-CoA or acyl-ACP. The sequence is that of Glycerol-3-phosphate acyltransferase from Serratia proteamaculans (strain 568).